The following is a 267-amino-acid chain: Eukaryotic translation initiation factor 3 subunit J (267 aa).

The segment at 1–70 is disordered; it reads MSWNDDDVFA…KDKKSSTDQV (70 aa). The segment covering 24 to 38 has biased composition (acidic residues); it reads WDAEEPIMESWDAEE. The span at 39 to 66 shows a compositional bias: basic and acidic residues; sequence TPAKKETSPKPDSKKNAKKDSKKDKKSS. A coiled-coil region spans residues 192 to 220; that stretch reads IESIRQSIATLNVLMKDKEREERRARLAK.

Belongs to the eIF-3 subunit J family. As to quaternary structure, component of the eukaryotic translation initiation factor 3 (eIF-3) complex.

It is found in the cytoplasm. Its function is as follows. Component of the eukaryotic translation initiation factor 3 (eIF-3) complex, which is involved in protein synthesis of a specialized repertoire of mRNAs and, together with other initiation factors, stimulates binding of mRNA and methionyl-tRNAi to the 40S ribosome. The eIF-3 complex specifically targets and initiates translation of a subset of mRNAs involved in cell proliferation. The protein is Eukaryotic translation initiation factor 3 subunit J of Vanderwaltozyma polyspora (strain ATCC 22028 / DSM 70294 / BCRC 21397 / CBS 2163 / NBRC 10782 / NRRL Y-8283 / UCD 57-17) (Kluyveromyces polysporus).